Consider the following 816-residue polypeptide: Leucine--tRNA ligase (816 aa).

The 'HIGH' region signature appears at 40 to 51 (SYPSGSQLHAGH). The 'KMSKS' region signature appears at 576 to 580 (KMSKS). Residue lysine 579 coordinates ATP.

This sequence belongs to the class-I aminoacyl-tRNA synthetase family.

The protein localises to the cytoplasm. The catalysed reaction is tRNA(Leu) + L-leucine + ATP = L-leucyl-tRNA(Leu) + AMP + diphosphate. The polypeptide is Leucine--tRNA ligase (Clostridium perfringens (strain SM101 / Type A)).